Consider the following 206-residue polypeptide: Small ribosomal subunit protein uS4 (206 aa).

Residues 15 to 46 are disordered; the sequence is MGENIWGRPKSPVNKREYGPGQHGQRRKNKLS. An S4 RNA-binding domain is found at 94 to 154; that stretch reads RRLDAIVYRA…EKSRQLALVL (61 aa).

It belongs to the universal ribosomal protein uS4 family. As to quaternary structure, part of the 30S ribosomal subunit. Contacts protein S5. The interaction surface between S4 and S5 is involved in control of translational fidelity.

One of the primary rRNA binding proteins, it binds directly to 16S rRNA where it nucleates assembly of the body of the 30S subunit. Functionally, with S5 and S12 plays an important role in translational accuracy. This is Small ribosomal subunit protein uS4 from Cereibacter sphaeroides (strain ATCC 17029 / ATH 2.4.9) (Rhodobacter sphaeroides).